We begin with the raw amino-acid sequence, 402 residues long: Putative F-box protein At1g70970 (402 aa).

The F-box domain occupies 4–52 (SSSETLHVEDLQTEIMSWLPLKSLLRFVIVSKKWASIIRGEQFKALYLR).

The polypeptide is Putative F-box protein At1g70970 (Arabidopsis thaliana (Mouse-ear cress)).